The sequence spans 106 residues: Large ribosomal subunit protein bL21 (106 aa).

This sequence belongs to the bacterial ribosomal protein bL21 family. Part of the 50S ribosomal subunit. Contacts protein L20.

This protein binds to 23S rRNA in the presence of protein L20. In Syntrophobacter fumaroxidans (strain DSM 10017 / MPOB), this protein is Large ribosomal subunit protein bL21.